We begin with the raw amino-acid sequence, 343 residues long: 3-dehydroquinate synthase (343 aa).

NAD(+) is bound by residues 86–90 (GALLD), 110–111 (TT), K123, and K132. E165, H229, and H243 together coordinate Zn(2+).

Belongs to the sugar phosphate cyclases superfamily. Dehydroquinate synthase family. Co(2+) is required as a cofactor. Requires Zn(2+) as cofactor. It depends on NAD(+) as a cofactor.

Its subcellular location is the cytoplasm. It carries out the reaction 7-phospho-2-dehydro-3-deoxy-D-arabino-heptonate = 3-dehydroquinate + phosphate. It participates in metabolic intermediate biosynthesis; chorismate biosynthesis; chorismate from D-erythrose 4-phosphate and phosphoenolpyruvate: step 2/7. Its function is as follows. Catalyzes the conversion of 3-deoxy-D-arabino-heptulosonate 7-phosphate (DAHP) to dehydroquinate (DHQ). The sequence is that of 3-dehydroquinate synthase from Pyrobaculum neutrophilum (strain DSM 2338 / JCM 9278 / NBRC 100436 / V24Sta) (Thermoproteus neutrophilus).